The sequence spans 187 residues: Calcium and integrin-binding family member 2 (187 aa).

EF-hand domains are found at residues 66 to 101 (RENP…LCES), 103 to 138 (PREL…LTKS), and 144 to 179 (EVVL…APDF). Ca(2+) contacts are provided by D116, N118, D120, D127, D157, D159, D161, K163, and D168.

As to quaternary structure, monomer. Homodimer. Interacts with WHRN and MYO7A. Interacts with ITGA2B (via C-terminus cytoplasmic tail region); the interactions are stabilized/increased in a calcium and magnesium-dependent manner. Interacts with ITGA7 (via C-terminus cytoplasmic tail region); the interactions are stabilized/increased in a calcium and magnesium-dependent manner. Interacts with TMC1. Interacts with TMC2. As to expression, widely expressed.

Its subcellular location is the cytoplasm. The protein resides in the cell projection. The protein localises to the stereocilium. It localises to the photoreceptor inner segment. It is found in the cilium. Its subcellular location is the photoreceptor outer segment. The protein resides in the cell membrane. The protein localises to the sarcolemma. Functionally, calcium- and integrin-binding protein that plays a role in intracellular calcium homeostasis. Acts as an auxiliary subunit of the sensory mechanoelectrical transduction (MET) channel in hair cells. Essential for mechanoelectrical transduction (MET) currents in auditory hair cells and thereby required for hearing. Regulates the function of hair cell mechanotransduction by controlling the distribution of transmembrane channel-like proteins TMC1 and TMC2, and by regulating the function of the MET channels in hair cells. Required for the maintenance of auditory hair cell stereocilia bundle morphology and function and for hair-cell survival in the cochlea. Critical for proper photoreceptor cell maintenance and function. Plays a role in intracellular calcium homeostasis by decreasing ATP-induced calcium release. This chain is Calcium and integrin-binding family member 2 (CIB2), found in Homo sapiens (Human).